Reading from the N-terminus, the 247-residue chain is 5'-nucleotidase SurE (247 aa).

A divalent metal cation contacts are provided by aspartate 8, aspartate 9, serine 39, and asparagine 91.

This sequence belongs to the SurE nucleotidase family. Requires a divalent metal cation as cofactor.

It is found in the cytoplasm. It catalyses the reaction a ribonucleoside 5'-phosphate + H2O = a ribonucleoside + phosphate. In terms of biological role, nucleotidase that shows phosphatase activity on nucleoside 5'-monophosphates. This chain is 5'-nucleotidase SurE, found in Aromatoleum aromaticum (strain DSM 19018 / LMG 30748 / EbN1) (Azoarcus sp. (strain EbN1)).